A 360-amino-acid polypeptide reads, in one-letter code: Variable large protein 14 (360 aa).

Positions 1–18 (MRKRISAIIMTLFMVLAS) are cleaved as a signal peptide. Cysteine 19 carries N-palmitoyl cysteine lipidation. Residue cysteine 19 is the site of S-diacylglycerol cysteine attachment.

Belongs to the variable large protein (Vlp) family. Beta subfamily.

The protein localises to the cell outer membrane. In terms of biological role, the Vlp and Vsp proteins are antigenically distinct proteins, only one vlp or vsp gene is transcriptionally active at any one time. Switching between these genes is a mechanism of host immune response evasion. In Borrelia hermsii, this protein is Variable large protein 14.